Here is a 904-residue protein sequence, read N- to C-terminus: Envelope glycoprotein B (904 aa).

Residues Met-1–Ala-22 form the signal peptide. The Virion surface portion of the chain corresponds to Ala-23–Pro-771. The disordered stretch occupies residues Val-40–Ala-83. A compositionally biased stretch (basic residues) spans Lys-60–Pro-70. Residues Asn-82 and Asn-136 are each glycosylated (N-linked (GlcNAc...) asparagine; by host). 5 cysteine pairs are disulfide-bonded: Cys-111-Cys-570, Cys-128-Cys-526, Cys-202-Cys-266, Cys-359-Cys-407, and Cys-593-Cys-630. Involved in fusion and/or binding to host membrane regions lie at residues Val-168–Tyr-174 and Arg-253–Tyr-260. N-linked (GlcNAc...) asparagine; by host glycans are attached at residues Asn-393, Asn-425, and Asn-486. The tract at residues Gln-467–Glu-490 is disordered. N-linked (GlcNAc...) asparagine; by host glycosylation occurs at Asn-671. Hydrophobic membrane proximal region regions lie at residues Ile-716–Ser-769 and Met-728–Met-768. The helical transmembrane segment at Phe-772–Phe-792 threads the bilayer. Residues Arg-793–Leu-904 lie on the Intravirion side of the membrane. A disordered region spans residues Thr-816–Phe-835. The Golgi targeting motif lies at Tyr-849–Leu-852. The segment at Lys-883–Leu-904 is disordered. Residues Tyr-889–Leu-892 carry the Internalization motif motif.

Belongs to the herpesviridae glycoprotein B family. As to quaternary structure, homotrimer; disulfide-linked. Binds to heparan sulfate proteoglycans. Interacts with gH/gL heterodimer.

It is found in the virion membrane. The protein localises to the host cell membrane. Its subcellular location is the host endosome membrane. The protein resides in the host Golgi apparatus membrane. Its function is as follows. Envelope glycoprotein that forms spikes at the surface of virion envelope. Essential for the initial attachment to heparan sulfate moieties of the host cell surface proteoglycans. Involved in fusion of viral and cellular membranes leading to virus entry into the host cell. Following initial binding to its host receptors, membrane fusion is mediated by the fusion machinery composed at least of gB and the heterodimer gH/gL. May be involved in the fusion between the virion envelope and the outer nuclear membrane during virion egress. This chain is Envelope glycoprotein B, found in Homo sapiens (Human).